An 87-amino-acid polypeptide reads, in one-letter code: Large ribosomal subunit protein bL31B (87 aa).

This sequence belongs to the bacterial ribosomal protein bL31 family. Type B subfamily. As to quaternary structure, part of the 50S ribosomal subunit.

This Burkholderia multivorans (strain ATCC 17616 / 249) protein is Large ribosomal subunit protein bL31B.